The chain runs to 337 residues: Fructose-1,6-bisphosphatase class 1 (337 aa).

Mg(2+) is bound by residues Glu-92, Asp-114, Leu-116, and Asp-117. Substrate is bound by residues 117 to 120 (DGSS), Asn-209, and Lys-275. Glu-281 is a Mg(2+) binding site.

Belongs to the FBPase class 1 family. As to quaternary structure, homotetramer. The cofactor is Mg(2+).

It localises to the cytoplasm. It carries out the reaction beta-D-fructose 1,6-bisphosphate + H2O = beta-D-fructose 6-phosphate + phosphate. It participates in carbohydrate biosynthesis; gluconeogenesis. The protein is Fructose-1,6-bisphosphatase class 1 of Thiobacillus denitrificans (strain ATCC 25259 / T1).